The sequence spans 199 residues: Photosystem I reaction center subunit XI (199 aa).

Helical transmembrane passes span 108–128 (ITAG…LLVL) and 165–185 (FWLG…TLHL).

This sequence belongs to the PsaL family.

The protein resides in the cellular thylakoid membrane. This is Photosystem I reaction center subunit XI from Prochlorococcus marinus (strain MIT 9515).